The primary structure comprises 89 residues: MALTTEEKKQVLSEYGLHETDTGSPEAQVAMLTKRIVDLTEHLKMHKHDHHSRRGLLLLVGRRRRLLKYVQKVDIERYRSLIERLGLRR.

Positions 1–21 (MALTTEEKKQVLSEYGLHETD) are enriched in basic and acidic residues. The tract at residues 1-24 (MALTTEEKKQVLSEYGLHETDTGS) is disordered.

This sequence belongs to the universal ribosomal protein uS15 family. Part of the 30S ribosomal subunit. Forms a bridge to the 50S subunit in the 70S ribosome, contacting the 23S rRNA.

In terms of biological role, one of the primary rRNA binding proteins, it binds directly to 16S rRNA where it helps nucleate assembly of the platform of the 30S subunit by binding and bridging several RNA helices of the 16S rRNA. Functionally, forms an intersubunit bridge (bridge B4) with the 23S rRNA of the 50S subunit in the ribosome. This chain is Small ribosomal subunit protein uS15, found in Rhodococcus jostii (strain RHA1).